Reading from the N-terminus, the 146-residue chain is Hemoglobin subunit beta (146 aa).

The Globin domain occupies 2–146 (PFSAHEEKLI…VAAALSVEYY (145 aa)). Heme b-binding residues include H63 and H92.

The protein belongs to the globin family. As to quaternary structure, heterotetramer of two alpha chains and two beta chains. When oxygenated in vitro, exists virtually only in polymeric form. When deoxygenated, forms tetramers, octamers and larger polymers. Red blood cells.

Its function is as follows. Involved in oxygen transport from the lung to the various peripheral tissues. The chain is Hemoglobin subunit beta from Paleosuchus palpebrosus (Cuvier's smooth-fronted caiman).